The primary structure comprises 195 residues: Heterogeneous nuclear ribonucleoprotein A/B (195 aa).

The disordered stretch occupies residues 1–23 (EEVADGQAHGEXVYREEHHEGEK). Residues 12–23 (XVYREEHHEGEK) show a composition bias toward basic and acidic residues. One can recognise an RRM domain in the interval 32 to 48 (EETKLFVGALSWETTEK). Asymmetric dimethylarginine occurs at positions 119 and 122. S173 carries the post-translational modification Phosphoserine; by CK2.

Post-translationally, extensively phosphorylated on tyrosine residues.

The protein resides in the cytoplasm. It is found in the nucleus. Functionally, may regulate mRNA translation and stability. It binds to poly(A) and poly(U) regions of RNA. This binding is inhibited when the protein is phosphorylated. The protein is Heterogeneous nuclear ribonucleoprotein A/B of Artemia salina (Brine shrimp).